A 304-amino-acid chain; its full sequence is Homoserine kinase (304 aa).

92 to 102 (PLARGLGSSAT) contributes to the ATP binding site.

It belongs to the GHMP kinase family. Homoserine kinase subfamily.

The protein resides in the cytoplasm. It carries out the reaction L-homoserine + ATP = O-phospho-L-homoserine + ADP + H(+). It participates in amino-acid biosynthesis; L-threonine biosynthesis; L-threonine from L-aspartate: step 4/5. Catalyzes the ATP-dependent phosphorylation of L-homoserine to L-homoserine phosphate. This chain is Homoserine kinase, found in Nostoc punctiforme (strain ATCC 29133 / PCC 73102).